We begin with the raw amino-acid sequence, 290 residues long: CMRF35-like molecule 1 (290 aa).

Positions 1 to 19 are cleaved as a signal peptide; sequence MPLLTLYLLLFWLSGYSIV. The region spanning 20-126 is the Ig-like V-type domain; it reads TQITGPTTVN…LGVTVQVTID (107 aa). At 20–156 the chain is on the extracellular side; that stretch reads TQITGPTTVN…DNRHKLLKLS (137 aa). Disulfide bonds link Cys-40-Cys-108 and Cys-54-Cys-62. The N-linked (GlcNAc...) asparagine glycan is linked to Asn-88. The helical transmembrane segment at 157–177 threads the bilayer; the sequence is VLLPLIFTILLLLLVAASLLA. The Cytoplasmic portion of the chain corresponds to 178-290; sequence WRMMKYQQKA…PTEYSTISRP (113 aa). The disordered stretch occupies residues 267-290; it reads GHLSSHLPGRGPEEPTEYSTISRP.

This sequence belongs to the CD300 family. Interacts with PTPN6/SHP-1 in a tyrosine phosphorylation dependent manner. Interacts with IL4R. Phosphorylated on tyrosine. Highly expressed in spleen, peripheral blood leukocyte and monocyte, and lung. Weakly expressed in thymus, heart, brain, placenta, liver, skeletal muscle, kidney, pancreas, prostate, testis, ovary, small intestine or colon. Expressed selectively in monocytes and monocyte-related cells.

Its subcellular location is the cell membrane. Functionally, acts as an inhibitory receptor for myeloid cells and mast cells. Positively regulates the phagocytosis of apoptotic cells (efferocytosis) via phosphatidylserine (PS) recognition; recognizes and binds PS as a ligand which is expressed on the surface of apoptotic cells. Plays an important role in the maintenance of immune homeostasis, by promoting macrophage-mediated efferocytosis and by inhibiting dendritic cell-mediated efferocytosis. Negatively regulates Fc epsilon receptor-dependent mast cell activation and allergic responses via binding to ceramide and sphingomyelin which act as ligands. May act as a coreceptor for interleukin 4 (IL-4). Associates with and regulates IL-4 receptor alpha-mediated responses by augmenting IL-4- and IL-13-induced signaling. Negatively regulates the Toll-like receptor (TLR) signaling mediated by MYD88 and TRIF through activation of PTPN6/SHP-1 and PTPN11/SHP-2. Inhibits osteoclast formation. Induces macrophage cell death upon engagement. This is CMRF35-like molecule 1 (CD300LF) from Homo sapiens (Human).